Here is a 113-residue protein sequence, read N- to C-terminus: Pancreatic progenitor cell differentiation and proliferation factor B (113 aa).

This sequence belongs to the PPDPF family.

Probable regulator of exocrine pancreas development. This chain is Pancreatic progenitor cell differentiation and proliferation factor B (ppdpf-b), found in Xenopus laevis (African clawed frog).